Here is a 543-residue protein sequence, read N- to C-terminus: uncharacterized protein (543 aa).

The TRAM domain maps to 1 to 59 (MLKKNDIVEVEIVDLTHEGAGVAKVDGLVFFVENALPSEKILMRVLKVNKKIGFGKVEK). Gln-283, Tyr-312, Glu-333, and Asp-381 together coordinate S-adenosyl-L-methionine. The active-site Nucleophile is the Cys-408.

It belongs to the class I-like SAM-binding methyltransferase superfamily. RNA M5U methyltransferase family.

This is an uncharacterized protein from Streptococcus pneumoniae serotype 4 (strain ATCC BAA-334 / TIGR4).